The primary structure comprises 347 residues: Uroporphyrinogen decarboxylase (347 aa).

Substrate-binding positions include arginine 24–arginine 28, phenylalanine 42, aspartate 73, tyrosine 150, threonine 205, and histidine 320.

Belongs to the uroporphyrinogen decarboxylase family. As to quaternary structure, homodimer.

The protein localises to the cytoplasm. The enzyme catalyses uroporphyrinogen III + 4 H(+) = coproporphyrinogen III + 4 CO2. The protein operates within porphyrin-containing compound metabolism; protoporphyrin-IX biosynthesis; coproporphyrinogen-III from 5-aminolevulinate: step 4/4. In terms of biological role, catalyzes the decarboxylation of four acetate groups of uroporphyrinogen-III to yield coproporphyrinogen-III. The sequence is that of Uroporphyrinogen decarboxylase from Gloeobacter violaceus (strain ATCC 29082 / PCC 7421).